The primary structure comprises 681 residues: DNA ligase (681 aa).

NAD(+) contacts are provided by residues 34-38 (DAEYD), 83-84 (SL), and glutamate 115. Lysine 117 serves as the catalytic N6-AMP-lysine intermediate. NAD(+)-binding residues include arginine 138, glutamate 185, lysine 301, and lysine 325. Residues cysteine 419, cysteine 422, cysteine 437, and cysteine 443 each coordinate Zn(2+). The region spanning 602-681 (RKSDVLAGQT…AALLALIGER (80 aa)) is the BRCT domain.

This sequence belongs to the NAD-dependent DNA ligase family. LigA subfamily. The cofactor is Mg(2+). Requires Mn(2+) as cofactor.

The catalysed reaction is NAD(+) + (deoxyribonucleotide)n-3'-hydroxyl + 5'-phospho-(deoxyribonucleotide)m = (deoxyribonucleotide)n+m + AMP + beta-nicotinamide D-nucleotide.. In terms of biological role, DNA ligase that catalyzes the formation of phosphodiester linkages between 5'-phosphoryl and 3'-hydroxyl groups in double-stranded DNA using NAD as a coenzyme and as the energy source for the reaction. It is essential for DNA replication and repair of damaged DNA. The protein is DNA ligase of Chloroflexus aggregans (strain MD-66 / DSM 9485).